The following is a 257-amino-acid chain: Beta-fibrinogenase mucrofibrase-4 (257 aa).

The N-terminal stretch at methionine 1–alanine 18 is a signal peptide. The propeptide occupies glutamine 19 to leucine 24. Residues valine 25–alanine 248 form the Peptidase S1 domain. 6 disulfide bridges follow: cysteine 31/cysteine 162, cysteine 49/cysteine 65, cysteine 97/cysteine 255, cysteine 141/cysteine 209, cysteine 173/cysteine 188, and cysteine 199/cysteine 224. Catalysis depends on charge relay system residues histidine 64 and aspartate 109. The active-site Charge relay system is the serine 203.

It belongs to the peptidase S1 family. Snake venom subfamily. In terms of assembly, monomer. As to expression, expressed by the venom gland.

It is found in the secreted. Snake venom serine protease with fibrinogenolytic activities. Cleaves beta-chain of fibrinogen (FGB) efficiently and shows relatively lower activity on alpha-chain. The protein is Beta-fibrinogenase mucrofibrase-4 of Protobothrops mucrosquamatus (Taiwan habu).